The primary structure comprises 212 residues: Protein GET1 (212 aa).

The Lumenal portion of the chain corresponds to 1–4 (MASL). The chain crosses the membrane as a helical span at residues 5 to 24 (LLFVLVIQIITYLINTIGAR). Topologically, residues 25–110 (TIDSLLWLLY…SFDWTIKTVR (86 aa)) are cytoplasmic. The stretch at 75-99 (AKLRRRHDKAMEEYDVKNKKLSALK) forms a coiled coil. The chain crosses the membrane as a helical span at residues 111 to 131 (WVSTTGVTVILQFWFSKSPIF). Residues 132-155 (DLPRGWLPWQVEWILSFPRAPLGT) lie on the Lumenal side of the membrane. Residues 156–172 (VSIQVWGGACGTVIALV) form a helical membrane-spanning segment. Residues 173 to 212 (GGAMGVAAPAFKKINQPRGEAQKMGTPRGSREQTPVRKTQ) are Cytoplasmic-facing. The tract at residues 189–212 (PRGEAQKMGTPRGSREQTPVRKTQ) is disordered. The segment covering 201–212 (GSREQTPVRKTQ) has biased composition (basic and acidic residues).

Belongs to the WRB/GET1 family. Interacts with GET3.

It is found in the endoplasmic reticulum membrane. Functionally, required for the post-translational delivery of tail-anchored (TA) proteins to the endoplasmic reticulum. Acts as a membrane receptor for soluble GET3, which recognizes and selectively binds the transmembrane domain of TA proteins in the cytosol. This Arthroderma otae (strain ATCC MYA-4605 / CBS 113480) (Microsporum canis) protein is Protein GET1.